The chain runs to 959 residues: Glycine dehydrogenase (decarboxylating) (959 aa).

The residue at position 708 (lysine 708) is an N6-(pyridoxal phosphate)lysine.

Belongs to the GcvP family. In terms of assembly, the glycine cleavage system is composed of four proteins: P, T, L and H. The cofactor is pyridoxal 5'-phosphate.

It carries out the reaction N(6)-[(R)-lipoyl]-L-lysyl-[glycine-cleavage complex H protein] + glycine + H(+) = N(6)-[(R)-S(8)-aminomethyldihydrolipoyl]-L-lysyl-[glycine-cleavage complex H protein] + CO2. The glycine cleavage system catalyzes the degradation of glycine. The P protein binds the alpha-amino group of glycine through its pyridoxal phosphate cofactor; CO(2) is released and the remaining methylamine moiety is then transferred to the lipoamide cofactor of the H protein. The polypeptide is Glycine dehydrogenase (decarboxylating) (Serratia proteamaculans (strain 568)).